We begin with the raw amino-acid sequence, 327 residues long: Thiamine-binding periplasmic protein (327 aa).

An N-terminal signal peptide occupies residues 1–18 (MLKKYLPLLLLCAAPAFA). Residues 59–60 (DG), 161–162 (ST), W197, and 215–218 (YTTS) contribute to the thiamine site.

The protein belongs to the bacterial solute-binding protein 1 family. The complex is composed of two ATP-binding proteins (ThiQ), two transmembrane proteins (ThiP) and a solute-binding protein (ThiB).

The protein localises to the periplasm. Its function is as follows. Part of the ABC transporter complex ThiBPQ involved in thiamine import. Is also involved in thiamine pyrophosphate transport. The polypeptide is Thiamine-binding periplasmic protein (Salmonella typhimurium (strain LT2 / SGSC1412 / ATCC 700720)).